The following is a 307-amino-acid chain: Beta-lactamase (307 aa).

An N-terminal signal peptide occupies residues 1–26 (MKLWFSTLKLKKAAAVLLFSCVALAG). Residue Cys-27 is the site of N-palmitoyl cysteine attachment. The S-diacylglycerol cysteine moiety is linked to residue Cys-27. Ser-86 acts as the Acyl-ester intermediate in catalysis. The active-site Proton acceptor is Glu-182. Position 248-250 (248-250 (KTG)) interacts with substrate.

It belongs to the class-A beta-lactamase family. In terms of processing, large exopenicillinase is the primary secretion product; it can be converted to small exopenicillinase.

It localises to the cell membrane. The enzyme catalyses a beta-lactam + H2O = a substituted beta-amino acid. The protein is Beta-lactamase (penP) of Bacillus licheniformis.